The following is a 151-amino-acid chain: Acidic phospholipase A2 5 (151 aa).

An N-terminal signal peptide occupies residues 1–27 (MYPAHLLVLLAVCVSLLGAASIPARPL). Intrachain disulfides connect cysteine 38/cysteine 104, cysteine 54/cysteine 151, cysteine 56/cysteine 72, cysteine 71/cysteine 132, cysteine 78/cysteine 125, cysteine 88/cysteine 118, and cysteine 111/cysteine 123. Residues tyrosine 55, glycine 57, and glycine 59 each contribute to the Ca(2+) site. Histidine 75 is an active-site residue. A Ca(2+)-binding site is contributed by aspartate 76. The active site involves aspartate 126.

It belongs to the phospholipase A2 family. Group I subfamily. D49 sub-subfamily. The cofactor is Ca(2+). As to expression, expressed by the venom gland.

The protein localises to the secreted. It carries out the reaction a 1,2-diacyl-sn-glycero-3-phosphocholine + H2O = a 1-acyl-sn-glycero-3-phosphocholine + a fatty acid + H(+). In terms of biological role, PLA2 catalyzes the calcium-dependent hydrolysis of the 2-acyl groups in 3-sn-phosphoglycerides. In Tropidechis carinatus (Australian rough-scaled snake), this protein is Acidic phospholipase A2 5.